The following is a 338-amino-acid chain: Phenylalanine--tRNA ligase alpha subunit (338 aa).

E252 is a Mg(2+) binding site.

Belongs to the class-II aminoacyl-tRNA synthetase family. Phe-tRNA synthetase alpha subunit type 1 subfamily. Tetramer of two alpha and two beta subunits. Mg(2+) serves as cofactor.

It localises to the cytoplasm. The catalysed reaction is tRNA(Phe) + L-phenylalanine + ATP = L-phenylalanyl-tRNA(Phe) + AMP + diphosphate + H(+). The polypeptide is Phenylalanine--tRNA ligase alpha subunit (Pseudomonas aeruginosa (strain ATCC 15692 / DSM 22644 / CIP 104116 / JCM 14847 / LMG 12228 / 1C / PRS 101 / PAO1)).